The sequence spans 277 residues: MSDQQLDCALDLMRRLPPQQIEKNLSDLIDLVPSLCEDLLSSVDQPLKIARDKVVGKDYLLCDYNRDGDSYRSPWSNKYDPPLEDGAMPSARLRKLEVEANNAFDQYRDLYFEGGVSSVYLWDLDHGFAGVILIKKAGDGSKKIKGCWDSIHVVEVQEKSSGRTAHYKLTSTVMLWLQTNKTGSGTMNLGGSLTRQMEKDETVSDSSPHIANIGRLVEDMENKIRSTLNEIYFGKTKDIVNGLRSIDAIPDNQKYKQLQRELSQVLTQRQIYIQPDN.

Serine 2 is subject to N-acetylserine.

Belongs to the F-actin-capping protein beta subunit family. Component of the F-actin capping complex, composed of a heterodimer of an alpha and a beta subunit. Component of the WASH complex. In terms of assembly, component of the F-actin capping complex, composed of a heterodimer of an alpha and a beta subunit. Subunit of dynactin, a multiprotein complex part of a tripartite complex with dynein and a adapter, such as BICDL1, BICD2 or HOOK3. The dynactin complex is built around ACTR1A/ACTB filament and consists of an actin-related filament composed of a shoulder domain, a pointed end and a barbed end. Its length is defined by its flexible shoulder domain. In terms of tissue distribution, isoform 1 is detected in pectoral muscle, cardiac muscle and gizzard. Isoform 2 is detected in brain and liver (at protein level). Isoform 2 is the predominant isoform of nonmuscle tissues and isoform 1 is the predominant isoform of muscle tissues.

It localises to the cytoplasm. Its subcellular location is the myofibril. It is found in the sarcomere. The protein localises to the z line. The protein resides in the i band. It localises to the cytoskeleton. In terms of biological role, F-actin-capping proteins bind in a Ca(2+)-independent manner to the fast growing ends of actin filaments (barbed end) thereby blocking the exchange of subunits at these ends. Unlike other capping proteins (such as gelsolin and severin), these proteins do not sever actin filaments. May play a role in the regulation of cell morphology and cytoskeletal organization. Forms, with CAPZB, the barbed end of the fast growing ends of actin filaments in the dynactin complex and stabilizes dynactin structure. The dynactin multiprotein complex activates the molecular motor dynein for ultra-processive transport along microtubules. The polypeptide is F-actin-capping protein subunit beta isoforms 1 and 2 (CAPZB) (Gallus gallus (Chicken)).